The chain runs to 432 residues: Cyclic GMP-AMP synthase (432 aa).

Residue 110–115 participates in GTP binding; the sequence is QGSFQY. Asp-129 and Asp-131 together coordinate Mg(2+). Arg-180 provides a ligand contact to ATP. Asp-191 lines the Mg(2+) pocket. Residue Ser-255 participates in ATP binding. GTP-binding residues include Lys-283, Ser-297, and Asp-344. Residue Gly-432 forms a Glycyl cysteine dithioester (Gly-Cys) (interchain with C-13 in Cap2) linkage. Residue Gly-432 forms a Glycyl cysteine dithioester (Gly-Cys) (interchain with C-493 in Cap2) linkage. Gly-432 is covalently cross-linked (Glycyl cysteine dithioester (Gly-Cys) (interchain with C-513 in Cap2)). Gly-432 is covalently cross-linked (Glycyl lysine isopeptide (Gly-Lys) (interchain with K-? in acceptor proteins)).

Belongs to the CD-NTase family. A02 subfamily. As to quaternary structure, a Cap2 dimer is bound on either side by a DncV monomer. Mg(2+) is required as a cofactor. In bacteria expressing capV-dncV-cap2-cap3, this protein is conjugated to about 130 cellular proteins by Cap2, most of which are involved in metabolism; more conjugated protein is found in the absence of Cap3. Most conjugation occurs via an isopeptide bond with the epsilon-amine of Lys on the target protein, but Cys-conjugation also occurs, including to Cap2. Conjugation or deconjugation from cellular proteins does not change the DncV activity in vitro, but does so in vivo during infection. Post-translationally, (Microbial infection) During phage T4 infection is conjugated to at least 2 T4 proteins (fibritin (wac) and dexA.2).

It carries out the reaction GTP + ATP = 3',3'-cGAMP + 2 diphosphate. Primed for activation by Cap2 which conjugates it to cellular proteins. cGAMP production is induced in phage T4 infected cells in a manner that requires Cap2 and Cap3, as well as a C-terminal Ala or Gly residue in this protein. Its function is as follows. Cyclic nucleotide synthase (second messenger synthase) of a CBASS antivirus system. CBASS (cyclic oligonucleotide-based antiphage signaling system) provides immunity against bacteriophages. The CD-NTase protein (DncV, this protein) synthesizes cyclic nucleotides in response to infection; these serve as specific second messenger signals. The signals activate a diverse range of effectors, leading to bacterial cell death and thus abortive phage infection. A type II-A(GA) CBASS system. Catalyzes the synthesis of 3',3'-cyclic GMP-AMP (cGAMP) from GTP and ATP, a second messenger in cell signal transduction. Its product controls the activity of cGAMP-activated phospholipase CapV, a patatin-like lipase that is a direct cGAMP receptor encoded in the dncV operon. Functionally, protects E.coli against phage infection. When capV and dncV are introduced in E.coli MG1655 there is 1000-fold protection against phage P1; protection against other phage (T2, T4, T5, T6 and lambda-vir) requires the 2 subsequent genes (cap2 and cap3). In another paper the capV-dncV-cap2-cap3 operon gives 10(4)-10(5)-fold protection against phages lambda, T2, T4 and T6, about 1000-fold protection against P1 and 10-fold protection against T5. The chain is Cyclic GMP-AMP synthase from Escherichia coli (strain TW11681).